The following is a 510-amino-acid chain: Probable cytochrome P450 4aa1 (510 aa).

Heme is bound at residue Cys450.

Belongs to the cytochrome P450 family. Requires heme as cofactor.

The protein resides in the endoplasmic reticulum membrane. It localises to the microsome membrane. Functionally, may be involved in the metabolism of insect hormones and in the breakdown of synthetic insecticides. This Drosophila melanogaster (Fruit fly) protein is Probable cytochrome P450 4aa1 (Cyp4aa1).